A 471-amino-acid polypeptide reads, in one-letter code: G2/mitotic-specific cyclin-1 (471 aa).

This sequence belongs to the cyclin family. Cyclin AB subfamily.

In terms of biological role, essential for the control of the cell cycle at the G2/M (mitosis) transition. Interacts with the CDC2 protein kinase to form MPF. G2/M cyclins accumulate steadily during G2 and are abruptly destroyed at mitosis. The sequence is that of G2/mitotic-specific cyclin-1 (CLB1) from Saccharomyces cerevisiae (strain ATCC 204508 / S288c) (Baker's yeast).